Reading from the N-terminus, the 180-residue chain is ATP synthase subunit delta (180 aa).

It belongs to the ATPase delta chain family. In terms of assembly, F-type ATPases have 2 components, F(1) - the catalytic core - and F(0) - the membrane proton channel. F(1) has five subunits: alpha(3), beta(3), gamma(1), delta(1), epsilon(1). F(0) has three main subunits: a(1), b(2) and c(10-14). The alpha and beta chains form an alternating ring which encloses part of the gamma chain. F(1) is attached to F(0) by a central stalk formed by the gamma and epsilon chains, while a peripheral stalk is formed by the delta and b chains.

The protein resides in the cell membrane. F(1)F(0) ATP synthase produces ATP from ADP in the presence of a proton or sodium gradient. F-type ATPases consist of two structural domains, F(1) containing the extramembraneous catalytic core and F(0) containing the membrane proton channel, linked together by a central stalk and a peripheral stalk. During catalysis, ATP synthesis in the catalytic domain of F(1) is coupled via a rotary mechanism of the central stalk subunits to proton translocation. In terms of biological role, this protein is part of the stalk that links CF(0) to CF(1). It either transmits conformational changes from CF(0) to CF(1) or is implicated in proton conduction. This Pediococcus pentosaceus (strain ATCC 25745 / CCUG 21536 / LMG 10740 / 183-1w) protein is ATP synthase subunit delta.